A 956-amino-acid chain; its full sequence is Nitrogen regulatory protein NUT1 (956 aa).

The span at 1–12 shows a compositional bias: basic and acidic residues; sequence MNPTITEHDFRF. Disordered stretches follow at residues 1–51, 120–222, 240–262, 348–373, and 524–661; these read MNPT…NDAQ, QQEE…PAAA, KTSI…FQVP, GQSI…SQVS, and TLPG…DAPT. The segment covering 15 to 37 has biased composition (low complexity); the sequence is RPAAPGRDPGSDSSDDPLPASLR. 4 stretches are compositionally biased toward polar residues: residues 42–51, 131–153, 167–194, and 208–217; these read DRQSAFNDAQ, PLKT…QKKS, SHGS…NAIS, and AAQSQFNPQS. The span at 588–613 shows a compositional bias: polar residues; it reads NASTTAIPNSQMQYEQQGVQGHTNSP. Low complexity-rich tracts occupy residues 623–633 and 640–661; these read SGFSSVVHSRP and SKNG…DAPT. A GATA-type zinc finger spans residues 663 to 687; the sequence is CTNCATQTTPLWRRNPEGQPLCNAC. The interval 708 to 890 is disordered; the sequence is KKRNRGSGSN…AATRPSGFGT (183 aa). Residues 713–760 are compositionally biased toward polar residues; that stretch reads GSGSNVPGATSGSRSKKGATSTAVSGTNTRKNSSLAISRTASTTNVQV. Positions 812-839 are enriched in low complexity; sequence VVPIAAAPPKNMPGPGAAAAARTVALGP. 2 stretches are compositionally biased toward polar residues: residues 849 to 863 and 872 to 881; these read SPAN…NANH and PENSTGSNEA.

It is found in the nucleus. In terms of biological role, major nitrogen regulatory protein; activates expression of nitrogen-regulated genes. In Pyricularia oryzae (strain 70-15 / ATCC MYA-4617 / FGSC 8958) (Rice blast fungus), this protein is Nitrogen regulatory protein NUT1 (NUT1).